The chain runs to 399 residues: Enoyl-[acyl-carrier-protein] reductase [NADH] (399 aa).

Residues 48–53 (GASTGY), 74–75 (FE), 111–112 (DA), and 139–140 (LA) each bind NAD(+). Position 225 (tyrosine 225) interacts with substrate. The Proton donor role is filled by tyrosine 235. NAD(+) is bound by residues lysine 244 and 273-275 (VVT).

This sequence belongs to the TER reductase family. As to quaternary structure, monomer.

It carries out the reaction a 2,3-saturated acyl-[ACP] + NAD(+) = a (2E)-enoyl-[ACP] + NADH + H(+). Its pathway is lipid metabolism; fatty acid biosynthesis. In terms of biological role, involved in the final reduction of the elongation cycle of fatty acid synthesis (FAS II). Catalyzes the reduction of a carbon-carbon double bond in an enoyl moiety that is covalently linked to an acyl carrier protein (ACP). In Serratia proteamaculans (strain 568), this protein is Enoyl-[acyl-carrier-protein] reductase [NADH].